Reading from the N-terminus, the 187-residue chain is Probable chemoreceptor glutamine deamidase CheD (187 aa).

The interval 164 to 187 (APQDVRRPTPPPMPAVASGDVDLF) is disordered.

This sequence belongs to the CheD family.

It catalyses the reaction L-glutaminyl-[protein] + H2O = L-glutamyl-[protein] + NH4(+). Functionally, probably deamidates glutamine residues to glutamate on methyl-accepting chemotaxis receptors (MCPs), playing an important role in chemotaxis. The protein is Probable chemoreceptor glutamine deamidase CheD of Caulobacter vibrioides (strain ATCC 19089 / CIP 103742 / CB 15) (Caulobacter crescentus).